Consider the following 140-residue polypeptide: Nucleoside diphosphate kinase (140 aa).

The ATP site is built by lysine 11, phenylalanine 59, arginine 87, threonine 93, arginine 104, and asparagine 114. The Pros-phosphohistidine intermediate role is filled by histidine 117.

It belongs to the NDK family. As to quaternary structure, homotetramer. The cofactor is Mg(2+).

It localises to the cytoplasm. It carries out the reaction a 2'-deoxyribonucleoside 5'-diphosphate + ATP = a 2'-deoxyribonucleoside 5'-triphosphate + ADP. The enzyme catalyses a ribonucleoside 5'-diphosphate + ATP = a ribonucleoside 5'-triphosphate + ADP. Functionally, major role in the synthesis of nucleoside triphosphates other than ATP. The ATP gamma phosphate is transferred to the NDP beta phosphate via a ping-pong mechanism, using a phosphorylated active-site intermediate. This is Nucleoside diphosphate kinase from Rhizobium etli (strain ATCC 51251 / DSM 11541 / JCM 21823 / NBRC 15573 / CFN 42).